Reading from the N-terminus, the 460-residue chain is Baeyer-Villiger oxidase AgnL3 (460 aa).

This sequence belongs to the questin oxidase family. NADPH is required as a cofactor.

It functions in the pathway secondary metabolite biosynthesis. In terms of biological role, baeyer-Villiger oxidase; part of the gene cluster that mediates the biosynthesis of agnestins, dihydroxy-xanthone metabolites. The pathway begins with the assembly and cyclization of atrochrysone thioester by the non-reducing polyketide synthase Agnpks1. The atrochrysone carboxyl ACP thioesterase AgnL7 then breaks the thioester bond and releases the atrochrysone carboxylic acid as the first enzyme-free intermediate. The decarboxylase AgnL1 then catalyzes the concerted decarboxylation-elimination required to convert atochrysone carboxylic acid into emodin anthrone, which is further oxidized to emodin by the anthrone oxygenase AgnL2. Emodin then undergoes reduction catalyzed by the oxidoreductase AgnL4 to yield the dihydroquinone tautomer which is the substrate for reduction by the short chain dehydrogenase AgnL6 reduction to produce hydroxyketone, followed by AgnL8 dehydration and likely spontaneous autoxidation to chrysophanol. Baeyer-Villiger oxidation by the oxidase AgnL3 leads to monodictyphenone via cleavage of the C-10/C-10a bond of chrysophanol. Alternative cleavage at the C-4a/C-10 bond of chrysophanol also leads to the formation some cephalone F. Further conversion to agnestins A and B, requires reduction to dihydro-monodictyphenone, oxidation to agnestin C probably via an epoxide, and rearrangement to either agnestin A or agnestin B directly, although agnestin A or agnestin B can also interconvert. Within the cluster, AgnR1 is the only unassigned oxidoreductase present which could be involved in this conversion. However, AgnR1 seems not to be involved in this step, and thus genes involved in the proposed oxidation/reduction may be located elsewhere on the genome. Further agnestin A derivatives are probably formed by spontaneous decarboxylations, dehydrations and methanolysis reactions. In Paecilomyces divaricatus (Penicillium divaricatum), this protein is Baeyer-Villiger oxidase AgnL3.